A 271-amino-acid chain; its full sequence is Zinc finger CCHC domain-containing protein 9 (271 aa).

The tract at residues 1-40 (MTRWARVSTTYNKRPLPATSWEDMKKGSFEGTSQNLPKRK) is disordered. At Ser48 the chain carries Phosphoserine. CCHC-type zinc fingers lie at residues 128 to 145 (MVCF…DCPA), 155 to 172 (GICY…KCKA), 184 to 201 (AKCF…SCPD), and 211 to 228 (GGCK…DCPE).

The protein resides in the nucleus. Its subcellular location is the nucleolus. In terms of biological role, may down-regulate transcription mediated by NF-kappa-B and the serum response element. In Homo sapiens (Human), this protein is Zinc finger CCHC domain-containing protein 9 (ZCCHC9).